The sequence spans 314 residues: Nodulation protein D 1 (314 aa).

An HTH lysR-type domain is found at 6 to 63 (LDLNLLVALDALMTERNLTAAARQINLSQPAMSAAIARLRSYFRDELFTMRGRELVPT). The H-T-H motif DNA-binding region spans 23–42 (LTAAARQINLSQPAMSAAIA).

This sequence belongs to the LysR transcriptional regulatory family.

In terms of biological role, nodD regulates the expression of the nodABCFE genes which encode other nodulation proteins. NodD is also a negative regulator of its own expression. Binds flavonoids as inducers. The protein is Nodulation protein D 1 (nodD1) of Bradyrhizobium elkanii.